Here is a 180-residue protein sequence, read N- to C-terminus: MSRIGKSPVTIPEGVTVDHKDGVVTVKGKLGELKQEIRDIDVKIEDNVITFERSSEKSDQKAKHGLYRALVNNMIEGVTNGYTKSLELVGVGYRATNQGNKLDLAVGYSHNIVLDLAPEVKVETISEKGKNPIVKVTSHDKQLVGQVAAKIRSFRAPEPYKGKGIKFVGEQLRRKAGKSA.

It belongs to the universal ribosomal protein uL6 family. As to quaternary structure, part of the 50S ribosomal subunit.

Its function is as follows. This protein binds to the 23S rRNA, and is important in its secondary structure. It is located near the subunit interface in the base of the L7/L12 stalk, and near the tRNA binding site of the peptidyltransferase center. The protein is Large ribosomal subunit protein uL6 of Christiangramia forsetii (strain DSM 17595 / CGMCC 1.15422 / KT0803) (Gramella forsetii).